Reading from the N-terminus, the 305-residue chain is Delta-9 acyl-lipid desaturase 1 (305 aa).

The disordered stretch occupies residues 1-20 (MSLSASEKEENNKKMAADKA). 2 helical membrane-spanning segments follow: residues 39-59 (IVKA…PFNF) and 60-80 (TWPA…GITV). Residues His-83, His-88, His-120, His-123, and His-124 each contribute to the Fe cation site. A Histidine box-1 motif is present at residues 83–88 (HRNLAH). A Histidine box-2 motif is present at residues 120–124 (HRYHH). The chain crosses the membrane as a helical span at residues 180-200 (VLYHILTFGFLLYYFGGLSFL). Fe cation contacts are provided by His-223, His-252, His-255, and His-256. The Histidine box-3 signature appears at 252–256 (HNNHH). The chain crosses the membrane as a helical span at residues 268-288 (WWQIDISWYIVRFLEIIGLAT).

Belongs to the fatty acid desaturase type 1 family. Fe cation is required as a cofactor. Strongly expressed in inflorescence meristems, leaves, and flowers, and weakly in roots and seedpods.

Its subcellular location is the endoplasmic reticulum membrane. The protein localises to the plastid. It localises to the chloroplast membrane. Its pathway is lipid metabolism; polyunsaturated fatty acid biosynthesis. Functionally, involved in delta-9 desaturation of fatty acids. Involved in the production of very-long-chain fatty acids (VLCFAs). May desaturate chloroplastic monogalactosyl diacylglycerol (MGDG) and alter chloroplast membrane fluidity, which is required to prime a cold acclimation response. The sequence is that of Delta-9 acyl-lipid desaturase 1 from Arabidopsis thaliana (Mouse-ear cress).